The following is a 130-amino-acid chain: Small ribosomal subunit protein uS8 (130 aa).

Belongs to the universal ribosomal protein uS8 family. As to quaternary structure, part of the 30S ribosomal subunit. Contacts proteins S5 and S12.

Functionally, one of the primary rRNA binding proteins, it binds directly to 16S rRNA central domain where it helps coordinate assembly of the platform of the 30S subunit. This Tolumonas auensis (strain DSM 9187 / NBRC 110442 / TA 4) protein is Small ribosomal subunit protein uS8.